Here is a 57-residue protein sequence, read N- to C-terminus: Large ribosomal subunit protein bL32 (57 aa).

This sequence belongs to the bacterial ribosomal protein bL32 family.

The polypeptide is Large ribosomal subunit protein bL32 (Bacillus anthracis (strain A0248)).